A 302-amino-acid chain; its full sequence is Ornithine carbamoyltransferase (302 aa).

Carbamoyl phosphate is bound by residues 47–50, glutamine 74, arginine 98, and 125–128; these read STRT and HPCQ. Residues asparagine 156, aspartate 220, and 224–225 contribute to the L-ornithine site; that span reads SM. Carbamoyl phosphate contacts are provided by residues 260-261 and arginine 288; that span reads CL.

It belongs to the aspartate/ornithine carbamoyltransferase superfamily. OTCase family.

The protein resides in the cytoplasm. The enzyme catalyses carbamoyl phosphate + L-ornithine = L-citrulline + phosphate + H(+). It participates in amino-acid biosynthesis; L-arginine biosynthesis; L-arginine from L-ornithine and carbamoyl phosphate: step 1/3. Its function is as follows. Reversibly catalyzes the transfer of the carbamoyl group from carbamoyl phosphate (CP) to the N(epsilon) atom of ornithine (ORN) to produce L-citrulline. This Methanosphaera stadtmanae (strain ATCC 43021 / DSM 3091 / JCM 11832 / MCB-3) protein is Ornithine carbamoyltransferase.